Consider the following 1047-residue polypeptide: Probable alpha-mannosidase At5g66150 (1047 aa).

Residues 1 to 27 (MEKPGMSLLKGSLCVIVFLLLLSLVES) form the signal peptide. 3 residues coordinate Zn(2+): histidine 56, aspartate 58, and aspartate 178. Asparagine 280, asparagine 287, and asparagine 345 each carry an N-linked (GlcNAc...) asparagine glycan. Histidine 419 is a Zn(2+) binding site. Disulfide bonds link cysteine 455-cysteine 465 and cysteine 476-cysteine 484. 8 N-linked (GlcNAc...) asparagine glycosylation sites follow: asparagine 480, asparagine 508, asparagine 541, asparagine 605, asparagine 606, asparagine 668, asparagine 780, and asparagine 857. Cysteines 855 and 860 form a disulfide.

Belongs to the glycosyl hydrolase 38 family. In terms of assembly, homodimer. It depends on Zn(2+) as a cofactor.

The protein resides in the vacuole. The catalysed reaction is Hydrolysis of terminal, non-reducing alpha-D-mannose residues in alpha-D-mannosides.. Its function is as follows. Liberates mannose from p-nitrophenyl-alpha-D-mannoside in vitro. The chain is Probable alpha-mannosidase At5g66150 from Arabidopsis thaliana (Mouse-ear cress).